The chain runs to 865 residues: AdoMet-dependent rRNA methyltransferase SPB1 (865 aa).

S-adenosyl-L-methionine-binding residues include Gly56, Trp58, Asp76, Asp92, and Asp117. The Proton acceptor role is filled by Lys157. Coiled-coil stretches lie at residues 358-400 and 462-492; these read ESMD…VRMQ and GETD…RKAA. Disordered regions lie at residues 370–396 and 443–676; these read LEKL…QKDI and VVAS…TKDG. Over residues 386–396 the composition is skewed to basic and acidic residues; sequence RKENERKQKDI. Acidic residues predominate over residues 463–483; that stretch reads ETDDESDEELDRLETELDDMY. A compositionally biased stretch (basic and acidic residues) spans 484 to 497; that stretch reads DQFRERKAASDAKY. Acidic residues predominate over residues 526–545; sequence ISDDSELEEESSGDSDDEDD. Residues 556 to 566 show a composition bias toward polar residues; it reads LDTTPSDNSGL. Positions 600-609 are enriched in acidic residues; it reads GEDEDADMED. Composition is skewed to basic and acidic residues over residues 610–627 and 659–676; these read TVSK…ADKK and KSGK…TKDG. The stretch at 762–789 forms a coiled coil; it reads REAKGRKKMKAAQRLEKLKKKSDLLVNE.

Belongs to the class I-like SAM-binding methyltransferase superfamily. RNA methyltransferase RlmE family. SPB1 subfamily. Component of the nucleolar and nucleoplasmic pre-60S ribosomal particle.

It localises to the nucleus. Its subcellular location is the nucleolus. It catalyses the reaction a ribonucleotide in rRNA + S-adenosyl-L-methionine = a 2'-O-methylribonucleotide in rRNA + S-adenosyl-L-homocysteine + H(+). Its function is as follows. Required for proper assembly of pre-ribosomal particles during the biogenesis of the 60S ribosomal subunit. This is AdoMet-dependent rRNA methyltransferase SPB1 from Pyricularia oryzae (strain 70-15 / ATCC MYA-4617 / FGSC 8958) (Rice blast fungus).